A 226-amino-acid polypeptide reads, in one-letter code: uncharacterized protein (226 aa).

2 disordered regions span residues 1 to 20 (MGAERVGRAPGVNAKRAVQT) and 205 to 226 (LDRKNTAIAQDKSERKKVQRDA).

This is an uncharacterized protein from Treponema pallidum (strain Nichols).